A 271-amino-acid polypeptide reads, in one-letter code: Tritrans,polycis-undecaprenyl-diphosphate synthase (geranylgeranyl-diphosphate specific) (271 aa).

D50 is a catalytic residue. D50 is a binding site for Mg(2+). Residues 51-54 (GNRR), F55, H67, and 95-97 (STE) contribute to the substrate site. The active-site Proton acceptor is N98. Residues R101, R220, and 226–228 (RLS) each bind substrate. E239 contacts Mg(2+).

The protein belongs to the UPP synthase family. Homodimer. Requires Mg(2+) as cofactor.

It catalyses the reaction geranylgeranyl diphosphate + 7 isopentenyl diphosphate = tri-trans,hepta-cis-undecaprenyl diphosphate + 7 diphosphate. Its function is as follows. Catalyzes the sequential condensation of isopentenyl diphosphate (IPP) with geranylgeranyl diphosphate (GGPP) to yield (2Z,6Z,10Z,14Z,18Z,22Z,26Z,30E,34E,38E)-undecaprenyl diphosphate (tritrans,heptacis-UPP). It is probably the precursor of glycosyl carrier lipids. The sequence is that of Tritrans,polycis-undecaprenyl-diphosphate synthase (geranylgeranyl-diphosphate specific) from Methanopyrus kandleri (strain AV19 / DSM 6324 / JCM 9639 / NBRC 100938).